The following is an 827-amino-acid chain: Glycerol-3-phosphate acyltransferase (827 aa).

An HXXXXD motif motif is present at residues 325–330; sequence CHRSHM.

The protein belongs to the GPAT/DAPAT family.

It is found in the cell inner membrane. The enzyme catalyses sn-glycerol 3-phosphate + an acyl-CoA = a 1-acyl-sn-glycero-3-phosphate + CoA. The protein operates within phospholipid metabolism; CDP-diacylglycerol biosynthesis; CDP-diacylglycerol from sn-glycerol 3-phosphate: step 1/3. This Shigella boydii serotype 4 (strain Sb227) protein is Glycerol-3-phosphate acyltransferase.